Reading from the N-terminus, the 407-residue chain is Phosphopentomutase (407 aa).

The Mn(2+) site is built by Asp-10, Asp-306, His-311, Asp-347, His-348, and His-359.

It belongs to the phosphopentomutase family. It depends on Mn(2+) as a cofactor.

The protein localises to the cytoplasm. It carries out the reaction 2-deoxy-alpha-D-ribose 1-phosphate = 2-deoxy-D-ribose 5-phosphate. The catalysed reaction is alpha-D-ribose 1-phosphate = D-ribose 5-phosphate. The protein operates within carbohydrate degradation; 2-deoxy-D-ribose 1-phosphate degradation; D-glyceraldehyde 3-phosphate and acetaldehyde from 2-deoxy-alpha-D-ribose 1-phosphate: step 1/2. Its function is as follows. Isomerase that catalyzes the conversion of deoxy-ribose 1-phosphate (dRib-1-P) and ribose 1-phosphate (Rib-1-P) to deoxy-ribose 5-phosphate (dRib-5-P) and ribose 5-phosphate (Rib-5-P), respectively. The sequence is that of Phosphopentomutase from Edwardsiella ictaluri (strain 93-146).